The following is a 289-amino-acid chain: F-box protein PP2-A11 (289 aa).

The F-box domain occupies Gln23–Lys69.

Part of a SCF (ASK-cullin-F-box) protein ligase complex. Interacts with SKP1A/ASK1.

The protein resides in the nucleus. It participates in protein modification; protein ubiquitination. Functionally, component of SCF(ASK-cullin-F-box) E3 ubiquitin ligase complexes, which may mediate the ubiquitination and subsequent proteasomal degradation of target proteins. In Arabidopsis thaliana (Mouse-ear cress), this protein is F-box protein PP2-A11 (PP2A11).